We begin with the raw amino-acid sequence, 150 residues long: MQIILLEKIGGLGNLGDIVTVKNGYARNFLIPAGKAKRATEANMKEFEARRAELEAKQAEILADARARQEKLDGQTVTVAQKAGVDGRLFGSVTNADIAAAIVAAGIEAVKANVRLPNGPLKAVGEYEVEVALHTDAVAKITVAVVAATE.

Belongs to the bacterial ribosomal protein bL9 family.

Its function is as follows. Binds to the 23S rRNA. The chain is Large ribosomal subunit protein bL9 from Neisseria meningitidis serogroup C (strain 053442).